A 548-amino-acid chain; its full sequence is Peptidyl-prolyl isomerase CWC27 (548 aa).

The region spanning 11–193 is the PPIase cyclophilin-type domain; it reads PTASVIIHTT…YPVKIERIEI (183 aa). Disordered stretches follow at residues 204 to 436 and 504 to 548; these read RSRV…GDEE and TLKD…RGAK. 4 stretches are compositionally biased toward basic and acidic residues: residues 328–340, 353–366, 406–428, and 504–516; these read EAPRKTALERANE, IHSEEPVKEKKKSA, RLEKAPPEKENEPAARETTKDGE, and TLKDEKKAARDAR.

Belongs to the cyclophilin-type PPIase family. CWC27 subfamily. As to quaternary structure, associated with the spliceosome.

The protein localises to the cytoplasm. It is found in the nucleus. It catalyses the reaction [protein]-peptidylproline (omega=180) = [protein]-peptidylproline (omega=0). Functionally, PPIases accelerate the folding of proteins. It catalyzes the cis-trans isomerization of proline imidic peptide bonds in oligopeptides. Involved in pre-mRNA splicing. The chain is Peptidyl-prolyl isomerase CWC27 (CWC27) from Gibberella zeae (strain ATCC MYA-4620 / CBS 123657 / FGSC 9075 / NRRL 31084 / PH-1) (Wheat head blight fungus).